The chain runs to 704 residues: Elongation factor G (704 aa).

In terms of domain architecture, tr-type G spans 8 to 291; that stretch reads DKVRNIGIMA…AVVEYLASPV (284 aa). GTP-binding positions include 17–24, 90–94, and 144–147; these read AHIDAGKT, DTPGH, and NKMD.

Belongs to the TRAFAC class translation factor GTPase superfamily. Classic translation factor GTPase family. EF-G/EF-2 subfamily.

Its subcellular location is the cytoplasm. Its function is as follows. Catalyzes the GTP-dependent ribosomal translocation step during translation elongation. During this step, the ribosome changes from the pre-translocational (PRE) to the post-translocational (POST) state as the newly formed A-site-bound peptidyl-tRNA and P-site-bound deacylated tRNA move to the P and E sites, respectively. Catalyzes the coordinated movement of the two tRNA molecules, the mRNA and conformational changes in the ribosome. The polypeptide is Elongation factor G (Chlorobium limicola (strain DSM 245 / NBRC 103803 / 6330)).